Here is a 238-residue protein sequence, read N- to C-terminus: MFEFVKLKNVCVNLSHRSILTDISLSLISNRVLTLIGPNGAGKSTLVRIILGLIKPNSGTIIRSNNLSVGYVPQKLHLNTLLPITVERFMKLSRKTNNIKIEEMLKRVKAESLKFCQLQKLSGGEMQRILFAKALLNNPNLLVLDEPTQGVDVMGQLALYKLINEIRHELQCAILIVSHDLNFVMAKTDDVICLNNHICCSGTPETVCNNLEFISIFGLKRVQELAIYHHNHNHIHNF.

Residues 5–220 (VKLKNVCVNL…LEFISIFGLK (216 aa)) form the ABC transporter domain. 37-44 (GPNGAGKS) is an ATP binding site.

It belongs to the ABC transporter superfamily. Zinc importer (TC 3.A.1.15.5) family. In terms of assembly, the complex is composed of two ATP-binding proteins (ZnuC), two transmembrane proteins (ZnuB) and a solute-binding protein (ZnuA).

It localises to the cell inner membrane. The catalysed reaction is Zn(2+)(out) + ATP(in) + H2O(in) = Zn(2+)(in) + ADP(in) + phosphate(in) + H(+)(in). Its function is as follows. Part of the ABC transporter complex ZnuABC involved in zinc import. Responsible for energy coupling to the transport system. This is Zinc import ATP-binding protein ZnuC from Buchnera aphidicola subsp. Acyrthosiphon pisum (strain APS) (Acyrthosiphon pisum symbiotic bacterium).